A 174-amino-acid chain; its full sequence is MRKEECFYLGKIAKKFSFKGEVLIYLDTDEPELYENLESVFVEHNKHLVPFFIETSSLHKGDFLRVRFEDVNTEEDADAIVGNSIYLPLTMLPKLTGNKFYFHEVIGFEIEDKRLGVFGKITSINDSSAQPLFEVLNGEVEILVPMIDHFLVKIDRENKKVIMDLPVGLVEMYL.

In terms of domain architecture, PRC barrel spans Gly-97–Tyr-173.

Belongs to the RimM family. As to quaternary structure, binds ribosomal protein uS19.

It localises to the cytoplasm. In terms of biological role, an accessory protein needed during the final step in the assembly of 30S ribosomal subunit, possibly for assembly of the head region. Essential for efficient processing of 16S rRNA. May be needed both before and after RbfA during the maturation of 16S rRNA. It has affinity for free ribosomal 30S subunits but not for 70S ribosomes. This Flavobacterium johnsoniae (strain ATCC 17061 / DSM 2064 / JCM 8514 / BCRC 14874 / CCUG 350202 / NBRC 14942 / NCIMB 11054 / UW101) (Cytophaga johnsonae) protein is Ribosome maturation factor RimM.